The sequence spans 416 residues: Tyrosine aminotransferase (416 aa).

N6-(pyridoxal phosphate)lysine is present on Lys253.

The protein belongs to the class-I pyridoxal-phosphate-dependent aminotransferase family. As to quaternary structure, homodimer. The cofactor is pyridoxal 5'-phosphate. The N-terminus is blocked.

It is found in the cytoplasm. The protein resides in the mitochondrion. It carries out the reaction L-tyrosine + 2-oxoglutarate = 3-(4-hydroxyphenyl)pyruvate + L-glutamate. Its pathway is amino-acid degradation; L-phenylalanine degradation; acetoacetate and fumarate from L-phenylalanine: step 2/6. Functionally, transaminase involved in tyrosine breakdown. Converts tyrosine to p-hydroxyphenylpyruvate. This is Tyrosine aminotransferase from Trypanosoma cruzi.